The sequence spans 220 residues: MATRRLMLLGAPGAGKGTQAQLLMQELGLPQVSTGDILRAAVKEGTPLGLEAQSYMNRGALVPDAVVVGLIEDRLARPDAGGGWILDGFPRTPAQAEALDGLLAHLAQSLEAVVLIDVPEAQLIERLTGRRTCPLCKRIFHVRFNPPPAAPPFCTDHTDCPSELVQRPDDTLEVVSKRLNVYRESTEPLIRYYQEQQKLTSVDGDRSPEVVYSELRELLG.

13 to 18 (GAGKGT) provides a ligand contact to ATP. The NMP stretch occupies residues 33–62 (STGDILRAAVKEGTPLGLEAQSYMNRGALV). AMP-binding positions include threonine 34, arginine 39, 60–62 (ALV), 88–91 (GFPR), and glutamine 95. An LID region spans residues 129–170 (GRRTCPLCKRIFHVRFNPPPAAPPFCTDHTDCPSELVQRPDD). Position 130 (arginine 130) interacts with ATP. 2 residues coordinate Zn(2+): cysteine 133 and cysteine 136. 139 to 140 (IF) serves as a coordination point for ATP. Zn(2+) is bound by residues aspartate 156 and cysteine 160. AMP contacts are provided by arginine 167 and arginine 178. Arginine 206 provides a ligand contact to ATP.

Belongs to the adenylate kinase family. Monomer.

The protein resides in the cytoplasm. It catalyses the reaction AMP + ATP = 2 ADP. It functions in the pathway purine metabolism; AMP biosynthesis via salvage pathway; AMP from ADP: step 1/1. In terms of biological role, catalyzes the reversible transfer of the terminal phosphate group between ATP and AMP. Plays an important role in cellular energy homeostasis and in adenine nucleotide metabolism. The protein is Adenylate kinase of Gloeobacter violaceus (strain ATCC 29082 / PCC 7421).